The sequence spans 257 residues: Snake venom serine protease 2C (257 aa).

Residues 1–18 form the signal peptide; that stretch reads MVLIRVLANLLILQLSYA. The propeptide occupies 19–24; sequence QKSSEL. Positions 25 to 248 constitute a Peptidase S1 domain; sequence VIGGHPCNIN…HLDWIKSIIA (224 aa). Intrachain disulfides connect Cys31/Cys162, Cys49/Cys65, Cys97/Cys255, Cys141/Cys209, Cys173/Cys188, and Cys199/Cys224. Residues His64 and Asp109 each act as charge relay system in the active site. 3 N-linked (GlcNAc...) asparagine glycosylation sites follow: Asn116, Asn120, and Asn121. The active-site Charge relay system is the Ser203.

This sequence belongs to the peptidase S1 family. Snake venom subfamily. As to quaternary structure, monomer. In terms of tissue distribution, expressed by the venom gland.

It localises to the secreted. In terms of biological role, snake venom serine protease that may act in the hemostasis system of the prey. The polypeptide is Snake venom serine protease 2C (TLG2C) (Craspedocephalus gramineus (Bamboo pit viper)).